The primary structure comprises 269 residues: Tryptophan synthase alpha chain (269 aa).

Active-site proton acceptor residues include E50 and D61.

Belongs to the TrpA family. In terms of assembly, tetramer of two alpha and two beta chains.

The enzyme catalyses (1S,2R)-1-C-(indol-3-yl)glycerol 3-phosphate + L-serine = D-glyceraldehyde 3-phosphate + L-tryptophan + H2O. The protein operates within amino-acid biosynthesis; L-tryptophan biosynthesis; L-tryptophan from chorismate: step 5/5. Its function is as follows. The alpha subunit is responsible for the aldol cleavage of indoleglycerol phosphate to indole and glyceraldehyde 3-phosphate. The protein is Tryptophan synthase alpha chain of Francisella tularensis subsp. tularensis (strain WY96-3418).